The following is a 101-amino-acid chain: Phosphoribosyl-AMP cyclohydrolase (101 aa).

Asp-71 serves as a coordination point for Mg(2+). Zn(2+) is bound at residue Cys-72. Mg(2+)-binding residues include Asp-73 and Asp-75. Residues Cys-88 and Cys-95 each coordinate Zn(2+).

This sequence belongs to the PRA-CH family. As to quaternary structure, homodimer. Requires Mg(2+) as cofactor. Zn(2+) is required as a cofactor.

It is found in the cytoplasm. It catalyses the reaction 1-(5-phospho-beta-D-ribosyl)-5'-AMP + H2O = 1-(5-phospho-beta-D-ribosyl)-5-[(5-phospho-beta-D-ribosylamino)methylideneamino]imidazole-4-carboxamide. It participates in amino-acid biosynthesis; L-histidine biosynthesis; L-histidine from 5-phospho-alpha-D-ribose 1-diphosphate: step 3/9. Its function is as follows. Catalyzes the hydrolysis of the adenine ring of phosphoribosyl-AMP. The sequence is that of Phosphoribosyl-AMP cyclohydrolase from Bacillus cytotoxicus (strain DSM 22905 / CIP 110041 / 391-98 / NVH 391-98).